We begin with the raw amino-acid sequence, 229 residues long: Putative N-acetylmannosamine-6-phosphate 2-epimerase (229 aa).

It belongs to the NanE family.

It catalyses the reaction an N-acyl-D-glucosamine 6-phosphate = an N-acyl-D-mannosamine 6-phosphate. It participates in amino-sugar metabolism; N-acetylneuraminate degradation; D-fructose 6-phosphate from N-acetylneuraminate: step 3/5. Functionally, converts N-acetylmannosamine-6-phosphate (ManNAc-6-P) to N-acetylglucosamine-6-phosphate (GlcNAc-6-P). This is Putative N-acetylmannosamine-6-phosphate 2-epimerase from Actinobacillus pleuropneumoniae serotype 5b (strain L20).